A 563-amino-acid chain; its full sequence is Arginine--tRNA ligase (563 aa).

The 'HIGH' region motif lies at 121–131; it reads PNIAKPFSIGH.

This sequence belongs to the class-I aminoacyl-tRNA synthetase family. As to quaternary structure, monomer.

Its subcellular location is the cytoplasm. It catalyses the reaction tRNA(Arg) + L-arginine + ATP = L-arginyl-tRNA(Arg) + AMP + diphosphate. The sequence is that of Arginine--tRNA ligase from Streptococcus pyogenes serotype M49 (strain NZ131).